Here is a 431-residue protein sequence, read N- to C-terminus: Enolase (431 aa).

Gln167 provides a ligand contact to (2R)-2-phosphoglycerate. Residue Glu209 is the Proton donor of the active site. Asp246, Glu289, and Asp316 together coordinate Mg(2+). Residues Lys341, Arg370, Ser371, and Lys392 each contribute to the (2R)-2-phosphoglycerate site. Lys341 serves as the catalytic Proton acceptor.

Belongs to the enolase family. As to quaternary structure, component of the RNA degradosome, a multiprotein complex involved in RNA processing and mRNA degradation. Mg(2+) is required as a cofactor.

The protein localises to the cytoplasm. Its subcellular location is the secreted. It is found in the cell surface. The enzyme catalyses (2R)-2-phosphoglycerate = phosphoenolpyruvate + H2O. The protein operates within carbohydrate degradation; glycolysis; pyruvate from D-glyceraldehyde 3-phosphate: step 4/5. Catalyzes the reversible conversion of 2-phosphoglycerate (2-PG) into phosphoenolpyruvate (PEP). It is essential for the degradation of carbohydrates via glycolysis. This chain is Enolase, found in Shewanella baltica (strain OS155 / ATCC BAA-1091).